The chain runs to 335 residues: Pro-cathepsin H (335 aa).

An N-terminal signal peptide occupies residues 1–22 (MWAVLPLLCAGAWLLGAPACGA). Residues 23–97 (AELAANSLEK…DELKRKYLWS (75 aa)) constitute a propeptide, activation peptide. N-linked (GlcNAc...) asparagine glycans are attached at residues asparagine 72 and asparagine 101. Cystine bridges form between cysteine 102/cysteine 327, cysteine 138/cysteine 181, cysteine 172/cysteine 214, and cysteine 272/cysteine 322. Residues 106 to 115 (KSNYLRGTGP) constitute a propeptide that is removed on maturation. Residue cysteine 141 is part of the active site. A glycan (N-linked (GlcNAc...) asparagine) is linked at asparagine 230. Catalysis depends on residues histidine 281 and asparagine 301.

It belongs to the peptidase C1 family. In terms of assembly, composed of a mini chain and a large chain. The large chain may be split into heavy and light chain. All chains are held together by disulfide bonds.

Its subcellular location is the lysosome. It catalyses the reaction Hydrolysis of proteins, acting as an aminopeptidase (notably, cleaving Arg-|-Xaa bonds) as well as an endopeptidase.. Important for the overall degradation of proteins in lysosomes. The polypeptide is Pro-cathepsin H (CTSH) (Bos taurus (Bovine)).